We begin with the raw amino-acid sequence, 163 residues long: Nucleotide-binding protein Mmcs_0777 (163 aa).

This sequence belongs to the YajQ family.

In terms of biological role, nucleotide-binding protein. This chain is Nucleotide-binding protein Mmcs_0777, found in Mycobacterium sp. (strain MCS).